We begin with the raw amino-acid sequence, 43 residues long: Protein PsbN (43 aa).

Residues 4 to 24 (AIVLSISMAAVVVAITGISIY) traverse the membrane as a helical segment.

The protein belongs to the PsbN family.

The protein resides in the cellular thylakoid membrane. In terms of biological role, may play a role in photosystem I and II biogenesis. This chain is Protein PsbN, found in Nostoc punctiforme (strain ATCC 29133 / PCC 73102).